We begin with the raw amino-acid sequence, 467 residues long: UPF0236 protein TTE0033/TTE0744/TTE0838/TTE0852/TTE1082/TTE1247/TTE1519/TTE1678/TTE1739/TTE1823/TTE2212 (467 aa).

It belongs to the UPF0236 family.

In Caldanaerobacter subterraneus subsp. tengcongensis (strain DSM 15242 / JCM 11007 / NBRC 100824 / MB4) (Thermoanaerobacter tengcongensis), this protein is UPF0236 protein TTE0033/TTE0744/TTE0838/TTE0852/TTE1082/TTE1247/TTE1519/TTE1678/TTE1739/TTE1823/TTE2212.